Reading from the N-terminus, the 264-residue chain is MNQNLIEVKNLTFKRGDRVIYDNLNLQVKKGKITAIMGPSGIGKTTLLKLIGGQLMPEQGEILFDGQDICRLSNRELYEVRKRMGMLFQSGALFTDISTFDNVAFPIREHTHLPENLIRQIVLMKLEAVGLRGAAALMPSELSGGMARRAALARAIALDPDLIMFDEPFTGQDPISMGVILSLIKRLNEALNLTSIVVSHDVEEVLSIADYAYIIADQKVIAEGTSEQLLQSQDLRVVQFLKGESDGPVRFKYPAQDYVKELFE.

One can recognise an ABC transporter domain in the interval 6–242 (IEVKNLTFKR…QDLRVVQFLK (237 aa)). Residue 38 to 45 (GPSGIGKT) coordinates ATP.

It belongs to the ABC transporter superfamily. MlaF family. In terms of assembly, the complex is composed of two ATP-binding proteins (MlaF), two transmembrane proteins (MlaE), two cytoplasmic solute-binding proteins (MlaB) and six periplasmic solute-binding proteins (MlaD).

The protein resides in the cell inner membrane. Functionally, part of the ABC transporter complex MlaFEDB, which is involved in a phospholipid transport pathway that maintains lipid asymmetry in the outer membrane by retrograde trafficking of phospholipids from the outer membrane to the inner membrane. Responsible for energy coupling to the transport system. This chain is Intermembrane phospholipid transport system ATP-binding protein MlaF, found in Haemophilus influenzae (strain ATCC 51907 / DSM 11121 / KW20 / Rd).